The sequence spans 215 residues: Adenylate kinase (215 aa).

10-15 (GAGKGT) provides a ligand contact to ATP. An NMP region spans residues 30–59 (STGDILRENVKNETELGKKAKEYMDKGLLV). AMP contacts are provided by residues Thr-31, Arg-36, 57 to 59 (LLV), 85 to 88 (GFPR), and Gln-92. Positions 126–163 (GRRICKNCGASFHVIYRPPQKEGVCDVCGGELYQREDD) are LID. Residue Arg-127 participates in ATP binding. Zn(2+) contacts are provided by Cys-130 and Cys-133. 136–137 (SF) lines the ATP pocket. Zn(2+)-binding residues include Cys-150 and Cys-153. Residues Arg-160 and Arg-171 each contribute to the AMP site. Position 198 (Gln-198) interacts with ATP.

It belongs to the adenylate kinase family. In terms of assembly, monomer.

It localises to the cytoplasm. The enzyme catalyses AMP + ATP = 2 ADP. It functions in the pathway purine metabolism; AMP biosynthesis via salvage pathway; AMP from ADP: step 1/1. In terms of biological role, catalyzes the reversible transfer of the terminal phosphate group between ATP and AMP. Plays an important role in cellular energy homeostasis and in adenine nucleotide metabolism. The chain is Adenylate kinase from Caldicellulosiruptor bescii (strain ATCC BAA-1888 / DSM 6725 / KCTC 15123 / Z-1320) (Anaerocellum thermophilum).